Reading from the N-terminus, the 917-residue chain is Outer membrane protein SlpA (917 aa).

The signal sequence occupies residues 1–23 (MKKRLVTLLAGLLTVLSMGFGLA). Residues 24 to 84 (QFSDVPAGHW…QQIEEELKTQ (61 aa)) form the SLH domain.

In terms of assembly, homotrimer.

The protein resides in the cell outer membrane. Plays an important role in the structural organization and integrity of the cell envelope, bridging the outer membrane to the peptidoglyan layer. Appears to be a nonselective channel. This is Outer membrane protein SlpA (slpA) from Thermus thermophilus (strain ATCC 27634 / DSM 579 / HB8).